A 147-amino-acid polypeptide reads, in one-letter code: Hemoglobin subunit beta (147 aa).

V2 is modified (N-acetylvaline). Positions 3–147 (HLTPEEKNAV…VANALAHKYH (145 aa)) constitute a Globin domain. Residue T13 is modified to Phosphothreonine. S45 bears the Phosphoserine mark. K60 is modified (N6-acetyllysine). Residue H64 coordinates heme b. Position 83 is an N6-acetyllysine (K83). H93 contributes to the heme b binding site. C94 carries the post-translational modification S-nitrosocysteine. Residue K145 is modified to N6-acetyllysine.

This sequence belongs to the globin family. Heterotetramer of two alpha chains and two beta chains. In terms of tissue distribution, red blood cells.

Its function is as follows. Involved in oxygen transport from the lung to the various peripheral tissues. This Macaca fascicularis (Crab-eating macaque) protein is Hemoglobin subunit beta (HBB).